We begin with the raw amino-acid sequence, 99 residues long: Aspartyl/glutamyl-tRNA(Asn/Gln) amidotransferase subunit C (99 aa).

Belongs to the GatC family. As to quaternary structure, heterotrimer of A, B and C subunits.

The catalysed reaction is L-glutamyl-tRNA(Gln) + L-glutamine + ATP + H2O = L-glutaminyl-tRNA(Gln) + L-glutamate + ADP + phosphate + H(+). It carries out the reaction L-aspartyl-tRNA(Asn) + L-glutamine + ATP + H2O = L-asparaginyl-tRNA(Asn) + L-glutamate + ADP + phosphate + 2 H(+). In terms of biological role, allows the formation of correctly charged Asn-tRNA(Asn) or Gln-tRNA(Gln) through the transamidation of misacylated Asp-tRNA(Asn) or Glu-tRNA(Gln) in organisms which lack either or both of asparaginyl-tRNA or glutaminyl-tRNA synthetases. The reaction takes place in the presence of glutamine and ATP through an activated phospho-Asp-tRNA(Asn) or phospho-Glu-tRNA(Gln). In Corynebacterium efficiens (strain DSM 44549 / YS-314 / AJ 12310 / JCM 11189 / NBRC 100395), this protein is Aspartyl/glutamyl-tRNA(Asn/Gln) amidotransferase subunit C.